A 324-amino-acid chain; its full sequence is 4-hydroxyphenylpyruvate 3-dimethylallyltransferase (324 aa).

The substrate site is built by Arg160 and Glu281.

It belongs to the aromatic prenyltransferase family. Monomer.

It catalyses the reaction 3-(4-hydroxyphenyl)pyruvate + dimethylallyl diphosphate = 3-dimethylallyl-4-hydroxyphenylpyruvate + diphosphate. Its pathway is antibiotic biosynthesis. Its function is as follows. Magnesium-independent aromatic prenyltransferase that catalyzes the irreversible transfer of a dimethylallyl group to 4-hydroxyphenylpyruvate to produce the ring A structure in the clorobiocin biosynthesis pathway. Clorobiocin is an aminocoumarin family antibiotic. The polypeptide is 4-hydroxyphenylpyruvate 3-dimethylallyltransferase (Streptomyces roseochromogenus subsp. oscitans).